Here is a 416-residue protein sequence, read N- to C-terminus: Phosphoribosylamine--glycine ligase (416 aa).

An ATP-grasp domain is found at Lys105–Gln310. Position 131–192 (Ile131–Ser192) interacts with ATP. The Mg(2+) site is built by Glu281 and Asn283.

Belongs to the GARS family. Mg(2+) is required as a cofactor. It depends on Mn(2+) as a cofactor.

The enzyme catalyses 5-phospho-beta-D-ribosylamine + glycine + ATP = N(1)-(5-phospho-beta-D-ribosyl)glycinamide + ADP + phosphate + H(+). The protein operates within purine metabolism; IMP biosynthesis via de novo pathway; N(1)-(5-phospho-D-ribosyl)glycinamide from 5-phospho-alpha-D-ribose 1-diphosphate: step 2/2. The sequence is that of Phosphoribosylamine--glycine ligase from Campylobacter jejuni subsp. jejuni serotype O:2 (strain ATCC 700819 / NCTC 11168).